The sequence spans 949 residues: Lon protease homolog, mitochondrial (949 aa).

The transit peptide at 1–65 directs the protein to the mitochondrion; that stretch reads MAASTGYVRL…VLPGGVQWRG (65 aa). Disordered regions lie at residues 68 to 94 and 213 to 240; these read DSGN…TGEG and EGLE…DELG. The Lon N-terminal domain maps to 112–359; sequence LPLIAITRNP…KALSLLKKEF (248 aa). The span at 223 to 232 shows a compositional bias: basic residues; sequence KSRRKLKRGK. 512-519 provides a ligand contact to ATP; it reads GPPGVGKT. Residues 748–938 form the Lon proteolytic domain; it reads VTPPGVVMGL…RDIFPIAFPR (191 aa). Catalysis depends on residues S844 and K887.

The protein belongs to the peptidase S16 family. In terms of assembly, homohexamer. Organized in a ring with a central cavity. The ATP-binding and proteolytic domains (AP-domain) form a hexameric chamber, while the N-terminal domain is arranged as a trimer of dimers. DNA and RNA binding is stimulated by substrate and inhibited by ATP binding. Interacts with TWNK and mitochondrial DNA polymerase subunit POLG. In terms of tissue distribution, detected in liver &gt; heart &gt; kidney &gt; testis.

The protein localises to the mitochondrion matrix. It carries out the reaction Hydrolysis of proteins in presence of ATP.. Its function is as follows. ATP-dependent serine protease that mediates the selective degradation of misfolded, unassembled or oxidatively damaged polypeptides as well as certain short-lived regulatory proteins in the mitochondrial matrix. Endogenous substrates include mitochondrial steroidogenic acute regulatory (StAR) protein, DELE1, helicase Twinkle (TWNK) and the large ribosomal subunit protein MRPL32/bL32m. MRPL32/bL32m is protected from degradation by LONP1 when it is bound to a nucleic acid (RNA), but TWNK is not. May also have a chaperone function in the assembly of inner membrane protein complexes. Participates in the regulation of mitochondrial gene expression and in the maintenance of the integrity of the mitochondrial genome. Binds to mitochondrial promoters and RNA in a single-stranded, site-specific, and strand-specific manner. May regulate mitochondrial DNA replication and/or gene expression using site-specific, single-stranded DNA binding to target the degradation of regulatory proteins binding to adjacent sites in mitochondrial promoters. This chain is Lon protease homolog, mitochondrial (Lonp1), found in Mus musculus (Mouse).